Here is a 938-residue protein sequence, read N- to C-terminus: Myocardin (938 aa).

Positions 12-27 (IRSKFRSVLQLRLQQR) match the MEF2C-binding motif. Residues 18 to 43 (SVLQLRLQQRRTQEQLANQGIIPPLK) form an RPEL 1 repeat. Residues 48 to 61 (FHEQRKHLDSDKAK) are compositionally biased toward basic and acidic residues. Positions 48–68 (FHEQRKHLDSDKAKNSLKRKA) are disordered. 2 RPEL repeats span residues 62–87 (NSLK…QAST) and 106–131 (DDLN…PVDS). Positions 153-205 (FEEDSSSDGLSPDQTRSEDPQNSAGSPPDAKASDTPSTGSLGTNQDLASGSEN) are HDAC5-binding. The tract at residues 154–281 (EEDSSSDGLS…DQKAEKSPPP (128 aa)) is disordered. Polar residues-rich tracts occupy residues 159-177 (SDGL…NSAG), 186-203 (DTPS…ASGS), and 210-220 (SASQPSHQSDA). The span at 248 to 265 (NRHKKPKDPKPKVKKLKY) shows a compositional bias: basic residues. The SAP domain maps to 371–405 (LDDLKVSELRQQLRIRGLPVSGTKTALMDRLRPFQ). Residues Ser-451, Ser-455, Ser-459, and Ser-463 each carry the phosphoserine; by GSK3-beta modification. The stretch at 516–561 (EKDKMLVEKQKVINELTWKLQQEQRQVEELRMQLQKQKRNNCSEKK) forms a coiled coil. Phosphoserine; by GSK3-beta is present on residues Ser-626, Ser-630, Ser-634, and Ser-638. Disordered stretches follow at residues 635–678 (PQHS…SSPI) and 693–734 (SDKV…MTRS). The span at 699–715 (KFSIPSPTFSKSSSAIS) shows a compositional bias: low complexity. The tract at residues 717–938 (VTQPPSYEDA…SSMDLHLQQW (222 aa)) is required for interaction with and ubiquitination by STUB1. Residues Ser-815, Ser-862, and Ser-869 each carry the phosphoserine; by MAPK1 and MAPK3 modification. Thr-896 is subject to Phosphothreonine; by MAPK1 and MAPK3.

As to quaternary structure, homodimer. Interacts with SRF, its association does not depend on specific DNA sequences for ternary complex formation. Interacts with MLLT7/FOXO4. Interacts (via C-terminal) with EP300 (via the CREB-binding domain). Interacts with HDAC4 and HDAC5. Interacts with MEF2C. Interacts (via C-terminus) with STUB1/CHIP. Interacts with PURB. In terms of processing, ubiquitinated; by STUB1/CHIP at the C-terminus, leading to its degradation by the proteasome. Phosphorylation by GSK3B is required for STUB1/CHIP-mediated ubiquitination. Post-translationally, phosphorylation negatively regulates the intrinsic myocardin transcriptional activity. Phosphorylated; by GSK3B. In terms of tissue distribution, expressed in the heart, aorta and bladder. Expressed in smooth muscle cell-containing tissues: stomach, small intestine, colon, lung, placenta and uterus. Very faint expression in prostate and skeletal muscle.

It localises to the nucleus. Smooth muscle cells (SM) and cardiac muscle cells-specific transcriptional factor which uses the canonical single or multiple CArG boxes DNA sequence. Acts as a cofactor of serum response factor (SRF) with the potential to modulate SRF-target genes. Plays a crucial role in cardiogenesis, urinary bladder development, and differentiation of the smooth muscle cell lineage (myogenesis). Positively regulates the transcription of genes involved in vascular smooth muscle contraction. In Homo sapiens (Human), this protein is Myocardin (MYOCD).